A 283-amino-acid chain; its full sequence is Phosphatidylserine decarboxylase proenzyme (283 aa).

Catalysis depends on charge relay system; for autoendoproteolytic cleavage activity residues Asp-88, His-145, and Ser-248. Ser-248 acts as the Schiff-base intermediate with substrate; via pyruvic acid; for decarboxylase activity in catalysis. Position 248 is a pyruvic acid (Ser); by autocatalysis (Ser-248).

This sequence belongs to the phosphatidylserine decarboxylase family. PSD-B subfamily. Prokaryotic type I sub-subfamily. In terms of assembly, heterodimer of a large membrane-associated beta subunit and a small pyruvoyl-containing alpha subunit. It depends on pyruvate as a cofactor. Is synthesized initially as an inactive proenzyme. Formation of the active enzyme involves a self-maturation process in which the active site pyruvoyl group is generated from an internal serine residue via an autocatalytic post-translational modification. Two non-identical subunits are generated from the proenzyme in this reaction, and the pyruvate is formed at the N-terminus of the alpha chain, which is derived from the carboxyl end of the proenzyme. The autoendoproteolytic cleavage occurs by a canonical serine protease mechanism, in which the side chain hydroxyl group of the serine supplies its oxygen atom to form the C-terminus of the beta chain, while the remainder of the serine residue undergoes an oxidative deamination to produce ammonia and the pyruvoyl prosthetic group on the alpha chain. During this reaction, the Ser that is part of the protease active site of the proenzyme becomes the pyruvoyl prosthetic group, which constitutes an essential element of the active site of the mature decarboxylase.

Its subcellular location is the cell membrane. The catalysed reaction is a 1,2-diacyl-sn-glycero-3-phospho-L-serine + H(+) = a 1,2-diacyl-sn-glycero-3-phosphoethanolamine + CO2. The protein operates within phospholipid metabolism; phosphatidylethanolamine biosynthesis; phosphatidylethanolamine from CDP-diacylglycerol: step 2/2. Catalyzes the formation of phosphatidylethanolamine (PtdEtn) from phosphatidylserine (PtdSer). The protein is Phosphatidylserine decarboxylase proenzyme of Acidovorax ebreus (strain TPSY) (Diaphorobacter sp. (strain TPSY)).